The chain runs to 351 residues: Glycerol-3-phosphate dehydrogenase [NAD(P)+] (351 aa).

NADPH-binding residues include Ser12, Trp13, His33, and Lys114. Lys114, Gly145, and Ser147 together coordinate sn-glycerol 3-phosphate. Ala149 contributes to the NADPH binding site. Sn-glycerol 3-phosphate is bound by residues Lys200, Asp253, Ser263, Arg264, and Asn265. Lys200 acts as the Proton acceptor in catalysis. Arg264 contacts NADPH. Residues Val288 and Glu290 each contribute to the NADPH site.

Belongs to the NAD-dependent glycerol-3-phosphate dehydrogenase family.

Its subcellular location is the cytoplasm. It catalyses the reaction sn-glycerol 3-phosphate + NAD(+) = dihydroxyacetone phosphate + NADH + H(+). It carries out the reaction sn-glycerol 3-phosphate + NADP(+) = dihydroxyacetone phosphate + NADPH + H(+). Its pathway is membrane lipid metabolism; glycerophospholipid metabolism. Functionally, catalyzes the reduction of the glycolytic intermediate dihydroxyacetone phosphate (DHAP) to sn-glycerol 3-phosphate (G3P), the key precursor for phospholipid synthesis. The sequence is that of Glycerol-3-phosphate dehydrogenase [NAD(P)+] from Lacticaseibacillus casei (strain BL23) (Lactobacillus casei).